Consider the following 380-residue polypeptide: Alpha-glucoside transport system permease protein AglG (380 aa).

Helical transmembrane passes span 13-33 (VHLS…GLLI), 179-199 (VIPI…PFPG), 202-222 (VLLA…LIPL), 239-259 (TYMG…IYLL), 288-308 (IILP…FLWT), and 344-364 (EILT…FFAL). The 198-residue stretch at 167–364 (FLNSLTVAVP…VVPLIVFFAL (198 aa)) folds into the ABC transmembrane type-1 domain.

Belongs to the binding-protein-dependent transport system permease family. MalFG subfamily.

Its subcellular location is the cell inner membrane. In terms of biological role, part of the binding-protein-dependent transport system for alpha-glucosides such as sucrose, maltose and trehalose. Probably responsible for the translocation of the substrate across the membrane. The sequence is that of Alpha-glucoside transport system permease protein AglG (aglG) from Rhizobium meliloti (strain 1021) (Ensifer meliloti).